The chain runs to 231 residues: MRRTVIGDETTARDVARADWVAGAGGVVRVGLTGGIASGKSTVSQMLGERGAVIIDYDRLSRDVVAVGTQGLAQVVEAFGREVLVADGSLNRSALGSIVFADLQARRRLEAIIHPLVEEAAHRVDEEARAADGLVVVVHDIPLLVETGRADEFDVVMVTDVDPAEQVRRVVERDGCSQADAWARIHAQASREEHLAVADVIIDTSVPLEDLPEQIDRVWSRIAGALRFDRR.

Residues Arg-29 to Arg-231 form the DPCK domain. Residue Ala-37–Thr-42 participates in ATP binding.

This sequence belongs to the CoaE family.

The protein resides in the cytoplasm. The enzyme catalyses 3'-dephospho-CoA + ATP = ADP + CoA + H(+). The protein operates within cofactor biosynthesis; coenzyme A biosynthesis; CoA from (R)-pantothenate: step 5/5. Its function is as follows. Catalyzes the phosphorylation of the 3'-hydroxyl group of dephosphocoenzyme A to form coenzyme A. This is Dephospho-CoA kinase from Cutibacterium acnes (strain DSM 16379 / KPA171202) (Propionibacterium acnes).